An 856-amino-acid polypeptide reads, in one-letter code: Leucine--tRNA ligase (856 aa).

The 'HIGH' region signature appears at 42 to 52 (PYPSGKLHMGH). Residues 615–619 (KMSKS) carry the 'KMSKS' region motif. K618 contacts ATP.

The protein belongs to the class-I aminoacyl-tRNA synthetase family.

Its subcellular location is the cytoplasm. The enzyme catalyses tRNA(Leu) + L-leucine + ATP = L-leucyl-tRNA(Leu) + AMP + diphosphate. This Chromohalobacter salexigens (strain ATCC BAA-138 / DSM 3043 / CIP 106854 / NCIMB 13768 / 1H11) protein is Leucine--tRNA ligase.